A 75-amino-acid chain; its full sequence is CLAVATA3/ESR (CLE)-related protein 2 (75 aa).

Residues 1–22 (MAKLSFTFCFLLFLLLSSIAAG) form the signal peptide. The tract at residues 40–75 (PSIEATSPTVEDDQAAGSHGKSPERLSPGGPDPQHH) is disordered. P67 and P70 each carry hydroxyproline. P70 carries O-linked (Ara...) hydroxyproline glycosylation.

This sequence belongs to the CLV3/ESR signal peptide family. In terms of assembly, interacts with the extracellular leucine-rich repeat region of CLV1. The O-glycosylation (arabinosylation) of the hydroxyproline Pro-70 enhances binding affinity of the CLE2p peptide for its receptor. As to expression, mostly expressed in roots and seedlings, and, to a lower extent, in apex.

It is found in the secreted. The protein localises to the extracellular space. Its function is as follows. Extracellular signal peptide that regulates cell fate. May act with CLV1 as a ligand-receptor pair in a signal transduction pathway, coordinating growth between adjacent meristematic regions. The sequence is that of CLAVATA3/ESR (CLE)-related protein 2 from Arabidopsis thaliana (Mouse-ear cress).